The sequence spans 1153 residues: uncharacterized protein (1153 aa).

Disordered stretches follow at residues 164–193 (TTIKQLPPPLPQPQPQPHQQQPHNKKQIDD), 224–245 (DNYDDIDNNNNNNNNSNNDDDK), 294–316 (KSPQKLKLQQQQQQQQQQKQSKH), 332–427 (EHKL…KNKK), 613–648 (LSMLDSTNDGSSQEYEEEEEEEKNQKNFEKEEEGEN), 683–703 (QQQQQEKEKQQQEKQQDEEMS), 717–740 (KSDDNNNNNDNNNNNNNNQTSKRK), 772–819 (NKKL…KTIE), 838–874 (ASSGGSNNNNNNDQNDSITTKEKERSETIKTHNEDEK), and 942–1106 (NNNN…NNEV). Positions 169-179 (LPPPLPQPQPQ) are enriched in pro residues. Low complexity-rich tracts occupy residues 231-240 (NNNNNNNNSN), 298-312 (KLKLQQQQQQQQQQK), 336-391 (QQQQ…TPKK), and 399-423 (NNVNNNNNNNNNNNNNNNNNNNNNN). Residues 613–625 (LSMLDSTNDGSSQ) show a composition bias toward polar residues. Basic and acidic residues predominate over residues 687-699 (QEKEKQQQEKQQD). Low complexity predominate over residues 721–734 (NNNNNDNNNNNNNN). Positions 772–784 (NKKLRVDSEDQQT) are enriched in basic and acidic residues. Composition is skewed to low complexity over residues 788–808 (TTTTTTTTTTTNTNNNNNNNN) and 839–854 (SSGGSNNNNNNDQNDS). Basic and acidic residues predominate over residues 856–874 (TTKEKERSETIKTHNEDEK). Low complexity predominate over residues 942–987 (NNNNNNNNNINNINNIGNKNTTVNNSNHSNHSNNNINNNNIFKNSN). 2 stretches are compositionally biased toward polar residues: residues 988–998 (PIVDTNFSSTT) and 1005–1015 (QSKIFTGNQLP). The span at 1019–1059 (INNENVVNNNNNNEINNTTTTTTNNNSGIHKNNNNYNSDNS) shows a compositional bias: low complexity. Positions 1064 to 1081 (DGLKQEKEEQKEEQKENK) are enriched in basic and acidic residues. The span at 1082–1105 (NNNNNNNNNNNNNNNNNNNNNNNE) shows a compositional bias: low complexity.

This is an uncharacterized protein from Dictyostelium discoideum (Social amoeba).